A 1292-amino-acid chain; its full sequence is Putative late blight resistance protein homolog R1C-3 (1292 aa).

Coiled-coil stretches lie at residues 394–414 (DSLA…ESMQ) and 505–526 (RMNE…KLLN). One can recognise an NB-ARC domain in the interval 505–792 (RMNEEIVGFE…SESFVKSCEG (288 aa)). 538 to 545 (GMPGLGKT) is a binding site for ATP. LRR repeat units lie at residues 842-865 (AEEN…VYSH), 920-944 (FKFL…LFYL), 963-991 (LWNL…VWDM), 1066-1089 (PIRL…CISA), 1094-1113 (YLEL…TADH), 1114-1142 (LKHL…MFPQ), and 1163-1187 (FPNL…FMDI). The region spanning 1211 to 1278 (ETQVEDNQNT…KLRNVAYADE (68 aa)) is the HMA domain.

It belongs to the disease resistance NB-LRR family.

It localises to the cytoplasm. The protein resides in the membrane. Its function is as follows. Confers resistance to late blight (Phytophthora infestans) races carrying the avirulence gene Avr1. Resistance proteins guard the plant against pathogens that contain an appropriate avirulence protein via an indirect interaction with this avirulence protein. That triggers a defense system including the hypersensitive response, which restricts the pathogen growth. This Solanum demissum (Wild potato) protein is Putative late blight resistance protein homolog R1C-3 (R1C-3).